Here is a 107-residue protein sequence, read N- to C-terminus: Inner membrane protein YgbE (107 aa).

Topologically, residues 1–20 (MRNSHNITLTNNDSLTEDEE) are cytoplasmic. Residues 21 to 43 (TTWSLPGAVVGFISWLFALAMPM) traverse the membrane as a helical segment. At 44-52 (LIYGSNTLF) the chain is on the periplasmic side. The helical transmembrane segment at 53–75 (FFIYTWPFFLALMPVAVVVGIAL) threads the bilayer. Residues 76-86 (HSLMDGKLRYS) are Cytoplasmic-facing. Residues 87–106 (IVFTLVTVGIMFGALFMWLL) form a helical membrane-spanning segment. A topological domain (periplasmic) is located at residue Gly-107.

It localises to the cell inner membrane. In Escherichia coli (strain K12), this protein is Inner membrane protein YgbE (ygbE).